Consider the following 1067-residue polypeptide: Glycine--tRNA ligase, chloroplastic/mitochondrial 2 (1067 aa).

The transit peptide at Met-1 to Ala-50 directs the protein to the chloroplast and mitochondrion. Glu-513 provides a ligand contact to substrate. ATP contacts are provided by residues Arg-589–Glu-596, Leu-619–Asn-624, Arg-744–Leu-745, and Gly-859–Arg-862. A substrate-binding site is contributed by Asn-624–Glu-628. Asn-855–Gly-859 provides a ligand contact to substrate.

This sequence belongs to the class-II aminoacyl-tRNA synthetase family. As to quaternary structure, homodimer.

It is found in the plastid. Its subcellular location is the chloroplast. It localises to the mitochondrion. The catalysed reaction is tRNA(Gly) + glycine + ATP = glycyl-tRNA(Gly) + AMP + diphosphate. In terms of biological role, catalyzes the attachment of glycine to tRNA(Gly). Is also able produce diadenosine tetraphosphate (Ap4A), a universal pleiotropic signaling molecule needed for cell regulation pathways, by direct condensation of 2 ATPs. The protein is Glycine--tRNA ligase, chloroplastic/mitochondrial 2 of Arabidopsis thaliana (Mouse-ear cress).